Here is a 249-residue protein sequence, read N- to C-terminus: 5'-nucleotidase SurE (249 aa).

A divalent metal cation-binding residues include aspartate 9, aspartate 10, serine 40, and asparagine 92.

This sequence belongs to the SurE nucleotidase family. The cofactor is a divalent metal cation.

The protein resides in the cytoplasm. It catalyses the reaction a ribonucleoside 5'-phosphate + H2O = a ribonucleoside + phosphate. In terms of biological role, nucleotidase that shows phosphatase activity on nucleoside 5'-monophosphates. The polypeptide is 5'-nucleotidase SurE (Shewanella putrefaciens (strain CN-32 / ATCC BAA-453)).